We begin with the raw amino-acid sequence, 131 residues long: Large ribosomal subunit protein eL32 (131 aa).

The protein belongs to the eukaryotic ribosomal protein eL32 family. In terms of assembly, component of the large ribosomal subunit (LSU). Mature N.crassa ribosomes consist of a small (40S) and a large (60S) subunit. The 40S small subunit contains 1 molecule of ribosomal RNA (18S rRNA) and at least 32 different proteins. The large 60S subunit contains 3 rRNA molecules (26S, 5.8S and 5S rRNA) and at least 42 different proteins.

It is found in the cytoplasm. Functionally, component of the ribosome, a large ribonucleoprotein complex responsible for the synthesis of proteins in the cell. The small ribosomal subunit (SSU) binds messenger RNAs (mRNAs) and translates the encoded message by selecting cognate aminoacyl-transfer RNA (tRNA) molecules. The large subunit (LSU) contains the ribosomal catalytic site termed the peptidyl transferase center (PTC), which catalyzes the formation of peptide bonds, thereby polymerizing the amino acids delivered by tRNAs into a polypeptide chain. The nascent polypeptides leave the ribosome through a tunnel in the LSU and interact with protein factors that function in enzymatic processing, targeting, and the membrane insertion of nascent chains at the exit of the ribosomal tunnel. This chain is Large ribosomal subunit protein eL32 (crp-63), found in Neurospora crassa (strain ATCC 24698 / 74-OR23-1A / CBS 708.71 / DSM 1257 / FGSC 987).